We begin with the raw amino-acid sequence, 900 residues long: Phosphoenolpyruvate carboxylase (900 aa).

Residues histidine 140 and lysine 568 contribute to the active site.

Belongs to the PEPCase type 1 family. Mg(2+) serves as cofactor.

It carries out the reaction oxaloacetate + phosphate = phosphoenolpyruvate + hydrogencarbonate. Its function is as follows. Forms oxaloacetate, a four-carbon dicarboxylic acid source for the tricarboxylic acid cycle. In Neisseria gonorrhoeae (strain ATCC 700825 / FA 1090), this protein is Phosphoenolpyruvate carboxylase.